Consider the following 552-residue polypeptide: Segmentation polarity homeobox protein engrailed (552 aa).

Positions 93 to 108 (SGSGSPASCSTPASST) are enriched in low complexity. Disordered stretches follow at residues 93–112 (SGSG…PLTI), 130–171 (THTT…TAKP), 309–419 (PAAP…GGKN), and 433–460 (DRPS…PRTA). The segment covering 135-151 (EEEEAEEDDDIDVDVDD) has biased composition (acidic residues). The segment covering 317–382 (PPLSSSASSL…SGSGVNASSP (66 aa)) has biased composition (low complexity). Positions 446–457 (QPKDKTNDEKRP) are enriched in basic and acidic residues. Positions 454–513 (EKRPRTAFSSEQLARLKREFNENRYLTERRRQQLSSELGLNEAQIKIWFQNKRAKIKKST) form a DNA-binding region, homeobox.

Belongs to the engrailed homeobox family. Phosphorylated. Phosphorylation may directly or allosterically modify its function.

Its subcellular location is the nucleus. Its function is as follows. This protein specifies the body segmentation pattern. It is required for the development of the central nervous system. Transcriptional regulator that represses activated promoters. Wg signaling operates by inactivating the SGG repression of EN autoactivation. In Drosophila melanogaster (Fruit fly), this protein is Segmentation polarity homeobox protein engrailed (en).